Consider the following 254-residue polypeptide: 5'-nucleotidase SurE (254 aa).

A divalent metal cation-binding residues include Asp8, Asp9, Ser39, and Asn97.

It belongs to the SurE nucleotidase family. A divalent metal cation is required as a cofactor.

It localises to the cytoplasm. It carries out the reaction a ribonucleoside 5'-phosphate + H2O = a ribonucleoside + phosphate. Nucleotidase that shows phosphatase activity on nucleoside 5'-monophosphates. The chain is 5'-nucleotidase SurE from Alkaliphilus metalliredigens (strain QYMF).